Here is a 1404-residue protein sequence, read N- to C-terminus: DNA-directed RNA polymerase subunit beta' (1404 aa).

Zn(2+) contacts are provided by Cys-70, Cys-72, Cys-85, and Cys-88. Asp-460, Asp-462, and Asp-464 together coordinate Mg(2+). Positions 825, 899, 906, and 909 each coordinate Zn(2+).

Belongs to the RNA polymerase beta' chain family. As to quaternary structure, the RNAP catalytic core consists of 2 alpha, 1 beta, 1 beta' and 1 omega subunit. When a sigma factor is associated with the core the holoenzyme is formed, which can initiate transcription. It depends on Mg(2+) as a cofactor. Zn(2+) serves as cofactor.

The catalysed reaction is RNA(n) + a ribonucleoside 5'-triphosphate = RNA(n+1) + diphosphate. In terms of biological role, DNA-dependent RNA polymerase catalyzes the transcription of DNA into RNA using the four ribonucleoside triphosphates as substrates. This is DNA-directed RNA polymerase subunit beta' from Nitrosomonas eutropha (strain DSM 101675 / C91 / Nm57).